The chain runs to 430 residues: Ethylene-responsive transcription factor WRI1 (430 aa).

Positions 1-26 are enriched in low complexity; it reads MKKRLTTSTCSSSPSSSVSSSTTTSS. A disordered region spans residues 1–66; that stretch reads MKKRLTTSTC…PASTRRSSIY (66 aa). Positions 53–63 are enriched in polar residues; that stretch reads NPTSPASTRRS. The AP2/ERF 1 DNA-binding region spans 65–131; sequence IYRGVTRHRW…WGPDTILNFP (67 aa). Threonine 70 carries the post-translational modification Phosphothreonine; by KIN10. Serine 166 is modified (phosphoserine; by KIN10). The AP2/ERF 2 DNA-binding region spans 167-225; that stretch reads KYRGVARHHHNGRWEARIGRVFGNKYLYLGTYNTQEEAAAAYDMAAIEYRGANAVTNFD. Residues 260–274 show a composition bias toward basic and acidic residues; it reads VETREAKEEPREEVK. Disordered regions lie at residues 260–297 and 398–422; these read VETR…EQQE and SPPS…TTTT.

Belongs to the AP2/ERF transcription factor family. AP2 subfamily. As to quaternary structure, interacts with KIN10 and KIN11. In terms of processing, ubiquitinated. The phosphorylation at Thr-70 and Ser-166 by KIN10 facilitates its degradation via the proteasomal pathway. As to expression, mostly expressed in siliques, especially in seeds. Also detected in roots and flowers, and, to a lower extent, in leaves stems and seedlings.

The protein localises to the nucleus. Its activity is regulated as follows. Down-regulated by KIN10 that controls its protein stability under a phosphorylation-dependent manner. Its function is as follows. May be involved in the regulation of gene expression by stress factors and by components of stress signal transduction pathways. Transcriptional activator involved in the activation of a subset of sugar-responsive genes and the control of carbon flow from sucrose import to oil accumulation in developing seeds. Binds to the GCC-box pathogenesis-related promoter element. Promotes sugar uptake and seed oil accumulation by glycolysis. Required for embryo development, seed germination and, indirectly, for seedling establishment. Negative regulator of the ABA-mediated germination inhibition. This chain is Ethylene-responsive transcription factor WRI1 (WRI1), found in Arabidopsis thaliana (Mouse-ear cress).